Here is a 611-residue protein sequence, read N- to C-terminus: UvrABC system protein C (611 aa).

In terms of domain architecture, GIY-YIG spans 19 to 97 (QRPGVYRMVD…IKELRPRYNV (79 aa)). The UVR domain occupies 207–242 (NQVIEELGARMEAASERLEFEAAAQYRDRIQALQAV).

This sequence belongs to the UvrC family. In terms of assembly, interacts with UvrB in an incision complex.

The protein localises to the cytoplasm. Its function is as follows. The UvrABC repair system catalyzes the recognition and processing of DNA lesions. UvrC both incises the 5' and 3' sides of the lesion. The N-terminal half is responsible for the 3' incision and the C-terminal half is responsible for the 5' incision. In Alkalilimnicola ehrlichii (strain ATCC BAA-1101 / DSM 17681 / MLHE-1), this protein is UvrABC system protein C.